The sequence spans 402 residues: S-adenosylmethionine synthase (402 aa).

An ATP-binding site is contributed by 137 to 142 (GQGSAD).

Belongs to the AdoMet synthase 2 family. Mg(2+) serves as cofactor.

It catalyses the reaction L-methionine + ATP + H2O = S-adenosyl-L-methionine + phosphate + diphosphate. The protein operates within amino-acid biosynthesis; S-adenosyl-L-methionine biosynthesis; S-adenosyl-L-methionine from L-methionine: step 1/1. In terms of biological role, catalyzes the formation of S-adenosylmethionine from methionine and ATP. The protein is S-adenosylmethionine synthase of Pyrobaculum calidifontis (strain DSM 21063 / JCM 11548 / VA1).